Consider the following 183-residue polypeptide: Large ribosomal subunit protein uL22 (183 aa).

Belongs to the universal ribosomal protein uL22 family.

The sequence is that of Large ribosomal subunit protein uL22 (RPL17) from Podocoryna carnea (Hydrozoan).